The chain runs to 1043 residues: Isoleucine--tRNA ligase (1043 aa).

The 'HIGH' region motif lies at 48–58 (PFATGLPHYGH). The short motif at 591-595 (KMSKR) is the 'KMSKS' region element. Residue lysine 594 coordinates ATP.

Belongs to the class-I aminoacyl-tRNA synthetase family. IleS type 2 subfamily. In terms of assembly, monomer. Zn(2+) is required as a cofactor.

The protein resides in the cytoplasm. It carries out the reaction tRNA(Ile) + L-isoleucine + ATP = L-isoleucyl-tRNA(Ile) + AMP + diphosphate. Its function is as follows. Catalyzes the attachment of isoleucine to tRNA(Ile). As IleRS can inadvertently accommodate and process structurally similar amino acids such as valine, to avoid such errors it has two additional distinct tRNA(Ile)-dependent editing activities. One activity is designated as 'pretransfer' editing and involves the hydrolysis of activated Val-AMP. The other activity is designated 'posttransfer' editing and involves deacylation of mischarged Val-tRNA(Ile). This Chlamydia pneumoniae (Chlamydophila pneumoniae) protein is Isoleucine--tRNA ligase.